We begin with the raw amino-acid sequence, 137 residues long: DPKDRKKIQFSXPAPPSQLDPRQLEMIRRRRPTPAMLFRLXEHSSPEEEASPHQRAAGEGHHLKSKRPNPCAYTPPSLKAVQRIAESHLQSISNLGENQASEEEDELGELRELGYPREEEEEEEEDDEEEEEEEDSQ.

A disordered region spans residues 1–137 (DPKDRKKIQF…EEEEEEEDSQ (137 aa)). Thr33 is subject to Phosphothreonine; by PKA. The span at 40–62 (LXEHSSPEEEASPHQRAAGEGHH) shows a compositional bias: basic and acidic residues. Ser44 and Ser45 each carry phosphoserine. Thr74 carries the phosphothreonine; by CDK5 modification. The span at 88–99 (HLQSISNLGENQ) shows a compositional bias: polar residues. Ser101 is subject to Phosphoserine. The span at 108-117 (GELRELGYPR) shows a compositional bias: basic and acidic residues. The span at 118 to 137 (EEEEEEEEDDEEEEEEEDSQ) shows a compositional bias: acidic residues. Ser136 is subject to Phosphoserine.

This sequence belongs to the protein phosphatase inhibitor 1 family. Phosphorylation of Thr-33 is required for activity. In terms of processing, dopamine- and cyclic AMP-regulated neuronal phosphoprotein.

It is found in the cytoplasm. Inhibitor of protein-phosphatase 1. The chain is Protein phosphatase 1 regulatory subunit 1B (PPP1R1B) from Sus scrofa (Pig).